Reading from the N-terminus, the 133-residue chain is Large ribosomal subunit protein bL17 (133 aa).

It belongs to the bacterial ribosomal protein bL17 family. Part of the 50S ribosomal subunit. Contacts protein L32.

The protein is Large ribosomal subunit protein bL17 of Ehrlichia chaffeensis (strain ATCC CRL-10679 / Arkansas).